Here is a 1100-residue protein sequence, read N- to C-terminus: cGMP-inhibited 3',5'-cyclic phosphodiesterase 3B (1100 aa).

Residues 1 to 11 (MRKDERERDAP) show a composition bias toward basic and acidic residues. Residues 1-28 (MRKDERERDAPAMRSPPPPPASAASPPE) are interaction with RAPGEF3. The interval 1 to 29 (MRKDERERDAPAMRSPPPPPASAASPPES) is disordered. Residue Ser-15 is modified to Phosphoserine. The next 6 membrane-spanning stretches (helical) occupy residues 69 to 89 (AGARLSLGVLAAFVLAALLGA), 110 to 130 (LSLSPLFSIACAFFFLTCFLT), 140 to 160 (AGSWWLLALPACCYLGDFAAW), 170 to 190 (PAAAGRLCLVLSCVGLLTLAP), 198 to 218 (VLVLLFAGLVWWVSFSGLGAL), and 225 to 245 (LLSCLVGGAGCLLALGLDHFF). A Phosphoserine; by PKB/AKT1 or PKB/AKT2 modification is found at Ser-273. Phosphoserine is present on residues Ser-274 and Ser-421. 2 disordered regions span residues 400–423 (RKLHKGLSGRTSFPTPQLRRSSGA) and 570–590 (EPDGTDHPSEKSGEEDSSVFS). Over residues 408–423 (GRTSFPTPQLRRSSGA) the composition is skewed to polar residues. The interval 415 to 439 (PQLRRSSGASSLLTNEHCSRWDRSS) is interaction with PIK3R6. A compositionally biased stretch (basic and acidic residues) spans 573–583 (GTDHPSEKSGE). A PDEase domain is found at 627–1061 (PNIDQEVSLD…KIWKEIIEEE (435 aa)). His-713 acts as the Proton donor in catalysis. His-713 serves as a coordination point for AMP. Mg(2+)-binding residues include His-717, His-797, Asp-798, and Asp-913. Positions 798, 913, and 964 each coordinate AMP. Over residues 993-1024 (EEGDDTESDDDDDDDDGDGGEELDSDDEETED) the composition is skewed to acidic residues. The tract at residues 993–1033 (EEGDDTESDDDDDDDDGDGGEELDSDDEETEDNLNPKPQRR) is disordered. Positions 1044–1079 (MHHLTENHKIWKEIIEEEEEKCKAEGNKLQVDNASL) form a coiled coil.

This sequence belongs to the cyclic nucleotide phosphodiesterase family. PDE3 subfamily. As to quaternary structure, homodimer. Interacts with PIK3CG; regulates PDE3B activity and thereby cAMP levels in cells. Interacts with RAPGEF3 and PIK3R6; form a signaling complex that regulates phosphatidylinositol 3-kinase gamma in angiogenesis. Interacts with ABHD15; this interaction regulates PDE3B's stability and expression and, thereby, impacts the antilipolytic action of insulin. Mg(2+) serves as cofactor. It depends on Mn(2+) as a cofactor. Post-translationally, phosphorylation at Ser-273 mediates insulin-induced activation of PDE3B. In terms of tissue distribution, abundant in adipose tissues.

It is found in the membrane. It catalyses the reaction a nucleoside 3',5'-cyclic phosphate + H2O = a nucleoside 5'-phosphate + H(+). The enzyme catalyses 3',5'-cyclic AMP + H2O = AMP + H(+). The catalysed reaction is 3',5'-cyclic GMP + H2O = GMP + H(+). With respect to regulation, inhibited by cGMP. Functionally, cyclic nucleotide phosphodiesterase with a dual-specificity for the second messengers cAMP and cGMP, which are key regulators of many important physiological processes. Regulates angiogenesis by inhibiting the cAMP-dependent guanine nucleotide exchange factor RAPGEF3 and downstream phosphatidylinositol 3-kinase gamma-mediated signaling. Controls cardiac contractility by reducing cAMP concentration in cardiocytes. This Mus musculus (Mouse) protein is cGMP-inhibited 3',5'-cyclic phosphodiesterase 3B.